The sequence spans 353 residues: 6-phosphogluconolactonase (353 aa).

Belongs to the cycloisomerase 2 family.

Its subcellular location is the cytoplasm. It carries out the reaction 6-phospho-D-glucono-1,5-lactone + H2O = 6-phospho-D-gluconate + H(+). It participates in carbohydrate degradation; pentose phosphate pathway; D-ribulose 5-phosphate from D-glucose 6-phosphate (oxidative stage): step 2/3. Its function is as follows. Carboxylic ester hydrolase that may be involved in ulvan degradation. Ulvan is the main polysaccharide component of the Ulvales (green seaweed) cell wall. It is composed of disaccharide building blocks comprising 3-sulfated rhamnose (Rha3S) linked to D-glucuronic acid (GlcA), L-iduronic acid (IduA), or D-xylose (Xyl). Catalyzes the hydrolysis of 6-phosphogluconolactone to 6-phosphogluconate. This Formosa agariphila (strain DSM 15362 / KCTC 12365 / LMG 23005 / KMM 3901 / M-2Alg 35-1) protein is 6-phosphogluconolactonase (pgl).